Here is an 812-residue protein sequence, read N- to C-terminus: Leucine-rich repeat-containing protein 41 (812 aa).

An interaction with Elongin BC complex region spans residues 45–54 (ALFELCGRAV). Phosphoserine occurs at positions 155, 276, and 326. The tract at residues 267–408 (GEASRGRAPS…GARTRQGPGA (142 aa)) is disordered. Position 327 is a phosphothreonine (T327). Positions 354 to 381 (TKRSPSAPAATSSASSSTSSYKRAPASS) are enriched in low complexity. 2 positions are modified to phosphoserine: S357 and S373. Basic residues predominate over residues 387–401 (PLKRFKRAAGKKGAR). LRR repeat units follow at residues 487–507 (WVSL…IFRL), 518–530 (AGCR…LSDL), 531–555 (FSPL…VLSI), 613–635 (SGSL…FGLV), 636–659 (LQTL…LADC), 701–728 (NSTL…VFSE), and 731–752 (SSSL…LLEF).

As to quaternary structure, part of an E3 ubiquitin-protein ligase complex with Elongin BC (ELOB and ELOC), RBX1 and CUL5. Component of a probable ECS(LRRC41) complex which contains CUL5, RNF7/RBX2, Elongin BC and LRRC41. Interacts with CUL5, RNF7, ELOB and ELOC.

It functions in the pathway protein modification; protein ubiquitination. Functionally, probable substrate recognition component of an ECS (Elongin BC-CUL2/5-SOCS-box protein) E3 ubiquitin ligase complex which mediates the ubiquitination and subsequent proteasomal degradation of target proteins. This is Leucine-rich repeat-containing protein 41 (LRRC41) from Homo sapiens (Human).